The sequence spans 362 residues: Cobalt-precorrin-5B C(1)-methyltransferase (362 aa).

The protein belongs to the CbiD family.

The enzyme catalyses Co-precorrin-5B + S-adenosyl-L-methionine = Co-precorrin-6A + S-adenosyl-L-homocysteine. It participates in cofactor biosynthesis; adenosylcobalamin biosynthesis; cob(II)yrinate a,c-diamide from sirohydrochlorin (anaerobic route): step 6/10. Its function is as follows. Catalyzes the methylation of C-1 in cobalt-precorrin-5B to form cobalt-precorrin-6A. This Geobacter sulfurreducens (strain ATCC 51573 / DSM 12127 / PCA) protein is Cobalt-precorrin-5B C(1)-methyltransferase.